We begin with the raw amino-acid sequence, 536 residues long: Prolyl 3-hydroxylase sudestada1 (536 aa).

Residues 1–35 (METSSSSPVKPRRKDKDEDGRAEQEDSADQVGEPH) form a disordered region. The span at 14-24 (KDKDEDGRAEQ) shows a compositional bias: basic and acidic residues. Residues 165–275 (KLDYVSASCS…RLTINGWFHG (111 aa)) enclose the Fe2OG dioxygenase domain. Fe cation is bound by residues His-185 and Asp-187. Tyr-199 is a 2-oxoglutarate binding site. A Fe cation-binding site is contributed by His-254. Arg-266 contributes to the 2-oxoglutarate binding site. Positions 467–486 (PTAKAPTDGRRSDYDDEEED) are disordered.

It belongs to the TPA1 family. As to quaternary structure, monomer. Fe(2+) is required as a cofactor. The cofactor is L-ascorbate. In third-instar larval tissues,highly expressed in the fat body, with significant expression in other organs including the brain, salivary glands, imaginal disks and gut.

It is found in the nucleus. Its subcellular location is the cytoplasm. The enzyme catalyses [ribosomal protein uS12]-L-proline + 2-oxoglutarate + O2 = [ribosomal protein uS12]-(3S)-3-hydroxy-L-proline + succinate + CO2. Functionally, prolyl 3-hydroxylase that catalyzes 3-hydroxylation of 'Pro-62' of small ribosomal subunit uS12 (RpS23), thereby regulating protein translation termination efficiency. The protein is Prolyl 3-hydroxylase sudestada1 (sud1) of Drosophila melanogaster (Fruit fly).